We begin with the raw amino-acid sequence, 608 residues long: uncharacterized protein (608 aa).

Residues 1–21 (MHTNSPLRADNQDLETQPLLR) are disordered. At Thr24 the chain carries Phosphothreonine. Position 27 is a phosphoserine (Ser27). A helical transmembrane segment spans residues 55-75 (IIYLLGIVLLSFFGVSIVQYI). Asn115, Asn141, Asn169, Asn407, Asn425, Asn449, Asn453, Asn527, and Asn580 each carry an N-linked (GlcNAc...) asparagine glycan.

It localises to the membrane. This is an uncharacterized protein from Saccharomyces cerevisiae (strain ATCC 204508 / S288c) (Baker's yeast).